A 501-amino-acid chain; its full sequence is Probable leucine aminopeptidase 2 (501 aa).

The N-terminal stretch at 1 to 18 (MVTMKLLYLTSFASLAVA) is a signal peptide. One can recognise a PA domain in the interval 119–216 (SPSVNATAPL…ADGQALIQMI (98 aa)). N123 and N233 each carry an N-linked (GlcNAc...) asparagine glycan. Positions 257 and 269 each coordinate Zn(2+). The active-site Proton acceptor is E301. E302 lines the Zn(2+) pocket. The N-linked (GlcNAc...) asparagine glycan is linked to N316. D330 contributes to the Zn(2+) binding site. N-linked (GlcNAc...) asparagine glycosylation occurs at N350. Position 428 (H428) interacts with Zn(2+). Residues N433 and N467 are each glycosylated (N-linked (GlcNAc...) asparagine). A disordered region spans residues 480 to 501 (AMKRTPHTHTGGTGCYKDRVEQ).

This sequence belongs to the peptidase M28 family. M28A subfamily. In terms of assembly, monomer. The cofactor is Zn(2+).

The protein resides in the secreted. Functionally, extracellular aminopeptidase that releases a wide variety of amino acids from natural peptides and contributes to pathogenicity. The sequence is that of Probable leucine aminopeptidase 2 (lap2) from Aspergillus fumigatus (strain ATCC MYA-4609 / CBS 101355 / FGSC A1100 / Af293) (Neosartorya fumigata).